A 306-amino-acid chain; its full sequence is uncharacterized protein (306 aa).

Positions N13–Q39 form a coiled coil. Disordered regions lie at residues Y44–N76, D103–Q204, and Q216–H249. The span at H119 to Q201 shows a compositional bias: low complexity. Over residues Q218–Q235 the composition is skewed to basic and acidic residues. Residues L279–P299 form a helical membrane-spanning segment.

It localises to the membrane. This is an uncharacterized protein from Acanthamoeba polyphaga mimivirus (APMV).